The primary structure comprises 112 residues: MSNIYDSANELSRGLRGLPEYKAVKAAKDAIAADAEASKIFTEYLAFQEEIQKLAHTGQMPDASFQAKMEGFGKQIQGNSLLSEFFTKQQQLAIYLSDIEKIVFEPVSELLK.

This sequence belongs to the UPF0342 family.

This is UPF0342 protein SPP_1392 from Streptococcus pneumoniae (strain P1031).